A 300-amino-acid polypeptide reads, in one-letter code: 4-diphosphocytidyl-2-C-methyl-D-erythritol kinase (300 aa).

Lys12 is an active-site residue. ATP is bound at residue 94–104 (PAQAGIGGGSS). Residue Asp136 is part of the active site.

It belongs to the GHMP kinase family. IspE subfamily.

The catalysed reaction is 4-CDP-2-C-methyl-D-erythritol + ATP = 4-CDP-2-C-methyl-D-erythritol 2-phosphate + ADP + H(+). The protein operates within isoprenoid biosynthesis; isopentenyl diphosphate biosynthesis via DXP pathway; isopentenyl diphosphate from 1-deoxy-D-xylulose 5-phosphate: step 3/6. Catalyzes the phosphorylation of the position 2 hydroxy group of 4-diphosphocytidyl-2C-methyl-D-erythritol. The sequence is that of 4-diphosphocytidyl-2-C-methyl-D-erythritol kinase from Verminephrobacter eiseniae (strain EF01-2).